The sequence spans 386 residues: Cell division protein FtsZ (386 aa).

GTP-binding positions include 18 to 22 (GGGVN), 105 to 107 (GTG), Glu-136, Arg-140, and Asp-184.

It belongs to the FtsZ family. In terms of assembly, homodimer. Polymerizes to form a dynamic ring structure in a strictly GTP-dependent manner. Interacts directly with several other division proteins.

Its subcellular location is the cytoplasm. In terms of biological role, essential cell division protein that forms a contractile ring structure (Z ring) at the future cell division site. The regulation of the ring assembly controls the timing and the location of cell division. One of the functions of the FtsZ ring is to recruit other cell division proteins to the septum to produce a new cell wall between the dividing cells. Binds GTP and shows GTPase activity. The polypeptide is Cell division protein FtsZ (Mycobacterium kansasii).